A 727-amino-acid chain; its full sequence is 1,4-alpha-glucan branching enzyme GlgB (727 aa).

D411 serves as the catalytic Nucleophile. Catalysis depends on E464, which acts as the Proton donor.

It belongs to the glycosyl hydrolase 13 family. GlgB subfamily. Monomer.

The catalysed reaction is Transfers a segment of a (1-&gt;4)-alpha-D-glucan chain to a primary hydroxy group in a similar glucan chain.. It functions in the pathway glycan biosynthesis; glycogen biosynthesis. Catalyzes the formation of the alpha-1,6-glucosidic linkages in glycogen by scission of a 1,4-alpha-linked oligosaccharide from growing alpha-1,4-glucan chains and the subsequent attachment of the oligosaccharide to the alpha-1,6 position. The chain is 1,4-alpha-glucan branching enzyme GlgB from Protochlamydia amoebophila (strain UWE25).